A 258-amino-acid polypeptide reads, in one-letter code: Cell division protein FtsQ (258 aa).

At 1–29 (MAKNAPAPRGARRKPVKKVGVPLRERVAT) the chain is on the cytoplasmic side. The chain crosses the membrane as a helical span at residues 30 to 50 (AVPWMLVGSVAMVSLLAVIYL). Over 51 to 258 (PAALDGYPIR…MAVTWREQQS (208 aa)) the chain is Periplasmic. The POTRA domain maps to 57-127 (YPIRKVGVDG…DTVVLTVEER (71 aa)).

Belongs to the FtsQ/DivIB family. FtsQ subfamily. In terms of assembly, part of a complex composed of FtsB, FtsL and FtsQ.

It is found in the cell inner membrane. In terms of biological role, essential cell division protein. May link together the upstream cell division proteins, which are predominantly cytoplasmic, with the downstream cell division proteins, which are predominantly periplasmic. May control correct divisome assembly. The protein is Cell division protein FtsQ of Alcanivorax borkumensis (strain ATCC 700651 / DSM 11573 / NCIMB 13689 / SK2).